Here is a 179-residue protein sequence, read N- to C-terminus: Large ribosomal subunit protein uL5 (179 aa).

Belongs to the universal ribosomal protein uL5 family. In terms of assembly, part of the 50S ribosomal subunit; part of the 5S rRNA/L5/L18/L25 subcomplex. Contacts the 5S rRNA and the P site tRNA. Forms a bridge to the 30S subunit in the 70S ribosome.

Functionally, this is one of the proteins that bind and probably mediate the attachment of the 5S RNA into the large ribosomal subunit, where it forms part of the central protuberance. In the 70S ribosome it contacts protein S13 of the 30S subunit (bridge B1b), connecting the 2 subunits; this bridge is implicated in subunit movement. Contacts the P site tRNA; the 5S rRNA and some of its associated proteins might help stabilize positioning of ribosome-bound tRNAs. The polypeptide is Large ribosomal subunit protein uL5 (Burkholderia mallei (strain ATCC 23344)).